We begin with the raw amino-acid sequence, 220 residues long: 1-Cys peroxiredoxin B (220 aa).

A Thioredoxin domain is found at 4 to 165; it reads LTLGDVVPDL…VLRATDALLT (162 aa). Residue cysteine 46 is the Cysteine sulfenic acid (-SOH) intermediate of the active site. The Bipartite nuclear localization signal signature appears at 195-218; sequence KARFPAGFETAQLPSNKCYLRFTQ.

It belongs to the peroxiredoxin family. Prx6 subfamily.

It is found in the nucleus. The protein resides in the cytoplasm. It carries out the reaction a hydroperoxide + [thioredoxin]-dithiol = an alcohol + [thioredoxin]-disulfide + H2O. Its function is as follows. Thiol-specific peroxidase that catalyzes the reduction of hydrogen peroxide and organic hydroperoxides to water and alcohols, respectively. Seems to contribute to the inhibition of germination during stress. This is 1-Cys peroxiredoxin B from Oryza sativa subsp. japonica (Rice).